We begin with the raw amino-acid sequence, 232 residues long: 26.5 kDa heat shock protein, mitochondrial (232 aa).

The N-terminal 42 residues, 1–42 (MALARLALRNLQQKLSPSLMGQSCERGLVGNRHNPMKLNRFM), are a transit peptide targeting the mitochondrion. The segment at 44–82 (TSAGEQEDKMNTEVSVSEKKSPRQNFPRRRGRKSLWRNT) is disordered. Residues 49–64 (QEDKMNTEVSVSEKKS) are compositionally biased toward basic and acidic residues. Basic residues predominate over residues 69 to 78 (FPRRRGRKSL). Residues 114–232 (IFDNFNVNPF…KKNVQEISVE (119 aa)) enclose the sHSP domain.

It belongs to the small heat shock protein (HSP20) family. In terms of assembly, may form oligomeric structures.

The protein localises to the mitochondrion. The chain is 26.5 kDa heat shock protein, mitochondrial (HSP26.5) from Arabidopsis thaliana (Mouse-ear cress).